The sequence spans 285 residues: V-set and transmembrane domain-containing protein 2B (285 aa).

The N-terminal stretch at 1-28 is a signal peptide; the sequence is MEQRNRLGALGYLLPLLLHSLLLFVADA. One can recognise an Ig-like V-type domain in the interval 29–143; sequence TFTEVPKDVT…DDDTQEHKAQ (115 aa). At 29–263 the chain is on the extracellular side; the sequence is TFTEVPKDVT…HGSGTGPGYS (235 aa). A disulfide bond links Cys-49 and Cys-127. The disordered stretch occupies residues 160–225; the sequence is AEAVSHIQSS…AAAAAASATH (66 aa). 2 stretches are compositionally biased toward low complexity: residues 176–189 and 208–225; these read ASSA…GAAV and PAGS…SATH. A helical transmembrane segment spans residues 264–284; sequence ADPLLSLLLLALHKFLHPLLG. His-285 is a topological domain (cytoplasmic).

It localises to the membrane. The polypeptide is V-set and transmembrane domain-containing protein 2B (Vstm2b) (Mus musculus (Mouse)).